Consider the following 439-residue polypeptide: Xylose isomerase (439 aa).

Active-site residues include H98 and D101. Mg(2+) is bound by residues E229, E265, H268, D293, D304, D306, and D335.

It belongs to the xylose isomerase family. In terms of assembly, homotetramer. Requires Mg(2+) as cofactor.

Its subcellular location is the cytoplasm. The enzyme catalyses alpha-D-xylose = alpha-D-xylulofuranose. Functionally, involved in D-xylose catabolism. The chain is Xylose isomerase (xylA) from Staphylococcus xylosus.